The primary structure comprises 65 residues: Defensin Cg-Defm (65 aa).

The N-terminal stretch at 1 to 22 is a signal peptide; the sequence is MKVFVLLTLAVLLMVSADMAFA. 3 residues coordinate beta-D-GlcNAc-(1-&gt;4)-Mur2Ac(oyl-L-Ala-gamma-D-Glu-L-Lys-D-Ala-D-Ala)-di-trans,octa-cis-undecaprenyl diphosphate: Phe-24, Gly-25, and Cys-26. 4 cysteine pairs are disulfide-bonded: Cys-26-Cys-47, Cys-33-Cys-56, Cys-37-Cys-58, and Cys-42-Cys-61. The interval 27 to 30 is binds to membrane interface; that stretch reads PGNQ. Residue His-36 participates in beta-D-GlcNAc-(1-&gt;4)-Mur2Ac(oyl-L-Ala-gamma-D-Glu-L-Lys-D-Ala-D-Ala)-di-trans,octa-cis-undecaprenyl diphosphate binding. Residues 48–54 are binds to membrane interface; sequence DAATLWL. Cys-56 provides a ligand contact to beta-D-GlcNAc-(1-&gt;4)-Mur2Ac(oyl-L-Ala-gamma-D-Glu-L-Lys-D-Ala-D-Ala)-di-trans,octa-cis-undecaprenyl diphosphate.

This sequence belongs to the invertebrate defensin family. Expressed in the mantle. Low or no expression in most of the organs analyzed, including hemocytes, heart, digestive gland, and gills.

Its subcellular location is the secreted. The protein localises to the target cell membrane. Its function is as follows. Antibacterial peptide mostly active against Gram-positive bacteria (M.lysodeikticus, S.aureus, and the marine bacteria, B.stationis, and M.maritypicum). It acts by selectively inhibiting peptidoglycan biosynthesis through complex formation with the cell wall precursor lipid II (1:1 molar ratio) thus inhibiting cell wall synthesis. It does not disrupt cell membranes. Is noticeably more potent than Cg-Defh1. It shows no or limited activities against Gram-negative bacteria and filamentous fungi. This Magallana gigas (Pacific oyster) protein is Defensin Cg-Defm.